Here is a 532-residue protein sequence, read N- to C-terminus: Flavin-containing monooxygenase 1 (532 aa).

An N-acetylalanine modification is found at A2. Over 2–510 (AKRVAIVGAG…ARVVQESPSP (509 aa)) the chain is Lumenal. FAD contacts are provided by residues 9–13 (GAGVS), E32, 40–41 (LW), and 61–62 (NS). Residues 60–61 (SN) and 195–198 (SGTD) each bind NADP(+). Residues 511–531 (FESFLKVFSFLALLVAIFLIF) form a helical membrane-spanning segment. L532 is a topological domain (cytoplasmic).

Belongs to the FMO family. Requires FAD as cofactor. As to expression, expressed mainly in fetal and adult liver.

It localises to the endoplasmic reticulum membrane. The enzyme catalyses hypotaurine + NADPH + O2 + H(+) = taurine + NADP(+) + H2O. It catalyses the reaction hypotaurine + NADH + O2 + H(+) = taurine + NAD(+) + H2O. It carries out the reaction trimethylamine + NADPH + O2 = trimethylamine N-oxide + NADP(+) + H2O. The catalysed reaction is N,N-dimethylaniline + NADPH + O2 + H(+) = N,N-dimethylaniline N-oxide + NADP(+) + H2O. Its function is as follows. Broad spectrum monooxygenase that catalyzes the oxygenation of a wide variety of nitrogen- and sulfur-containing compounds including xenobiotics. Catalyzes the S-oxygenation of hypotaurine to produce taurine, an organic osmolyte involved in cell volume regulation as well as a variety of cytoprotective and developmental processes. In vitro, catalyzes the N-oxygenation of trimethylamine (TMA) to produce trimethylamine N-oxide (TMAO) and could therefore participate to the detoxification of this compound that is generated by the action of gut microbiota from dietary precursors such as choline, choline containing compounds, betaine or L-carnitine. The polypeptide is Flavin-containing monooxygenase 1 (Homo sapiens (Human)).